A 521-amino-acid chain; its full sequence is GMP synthase [glutamine-hydrolyzing] (521 aa).

Residues 9–203 (KILILDFGSQ…VSDICQCKKN (195 aa)) enclose the Glutamine amidotransferase type-1 domain. The active-site Nucleophile is the Cys86. Active-site residues include His177 and Glu179. Residues 204–396 (WTTDNIITKL…LGLPTHMLNC (193 aa)) form the GMPS ATP-PPase domain. 231–237 (SGGVDSS) contacts ATP.

As to quaternary structure, homodimer.

The catalysed reaction is XMP + L-glutamine + ATP + H2O = GMP + L-glutamate + AMP + diphosphate + 2 H(+). The protein operates within purine metabolism; GMP biosynthesis; GMP from XMP (L-Gln route): step 1/1. Functionally, catalyzes the synthesis of GMP from XMP. In Vesicomyosocius okutanii subsp. Calyptogena okutanii (strain HA), this protein is GMP synthase [glutamine-hydrolyzing].